The sequence spans 210 residues: Two-component response regulator ORR7 (210 aa).

Residues 53–92 (VVPLHDNASAEDDDDDEEDDDEDDDDDDDEDDEEEAAPPY) form a disordered region. Over residues 61-88 (SAEDDDDDEEDDDEDDDDDDDEDDEEEA) the composition is skewed to acidic residues. The region spanning 92-205 (YVMAVDDSSV…VRPADISRIT (114 aa)) is the Response regulatory domain. 4-aspartylphosphate is present on D142.

The protein belongs to the ARR family. Type-A subfamily. In terms of processing, two-component system major event consists of a His-to-Asp phosphorelay between a sensor histidine kinase (HK) and a response regulator (RR). In plants, the His-to-Asp phosphorelay involves an additional intermediate named Histidine-containing phosphotransfer protein (HPt). This multistep phosphorelay consists of a His-Asp-His-Asp sequential transfer of a phosphate group between first a His and an Asp of the HK protein, followed by the transfer to a conserved His of the HPt protein and finally the transfer to an Asp in the receiver domain of the RR protein.

In terms of biological role, functions as a response regulator involved in His-to-Asp phosphorelay signal transduction system. Phosphorylation of the Asp residue in the receiver domain activates the ability of the protein to promote the transcription of target genes. Type-A response regulators seem to act as negative regulators of the cytokinin signaling. This chain is Two-component response regulator ORR7, found in Oryza sativa subsp. japonica (Rice).